The sequence spans 387 residues: Phosphoglycerate kinase (387 aa).

Residues 21–23 (DLN), Arg-36, 59–62 (HLGR), Arg-113, and Arg-146 each bind substrate. ATP is bound by residues Lys-197, Glu-314, and 340-343 (GGDT).

Belongs to the phosphoglycerate kinase family. In terms of assembly, monomer.

The protein localises to the cytoplasm. It carries out the reaction (2R)-3-phosphoglycerate + ATP = (2R)-3-phospho-glyceroyl phosphate + ADP. The protein operates within carbohydrate degradation; glycolysis; pyruvate from D-glyceraldehyde 3-phosphate: step 2/5. The chain is Phosphoglycerate kinase from Pseudomonas syringae pv. tomato (strain ATCC BAA-871 / DC3000).